We begin with the raw amino-acid sequence, 495 residues long: UDP-glycosyltransferase 73E1 (495 aa).

UDP-alpha-D-glucose-binding positions include Ser299, 355–356, 373–381, and 395–398; these read WA, HCGWNSTIE, and FADQ.

It belongs to the UDP-glycosyltransferase family.

In terms of biological role, may glycosylate diterpenes or flavonols in leaves. This is UDP-glycosyltransferase 73E1 from Stevia rebaudiana (Stevia).